The following is a 62-amino-acid chain: Large ribosomal subunit protein bL28 (62 aa).

It belongs to the bacterial ribosomal protein bL28 family.

The sequence is that of Large ribosomal subunit protein bL28 from Bacillus velezensis (strain DSM 23117 / BGSC 10A6 / LMG 26770 / FZB42) (Bacillus amyloliquefaciens subsp. plantarum).